The following is a 329-amino-acid chain: uncharacterized protein (329 aa).

The next 9 helical transmembrane spans lie at 5 to 24 (NLLL…FLTV), 34 to 56 (IAVA…YLIF), 92 to 114 (FGYI…LEWG), 124 to 146 (IIFF…VLFY), 159 to 181 (SANF…LLSL), 196 to 218 (TAHR…LQYL), 231 to 253 (FSIV…LGAY), 263 to 285 (LIGV…RLFG), and 306 to 328 (FWLF…RILT).

The protein localises to the cell membrane. This is an uncharacterized protein from Archaeoglobus fulgidus (strain ATCC 49558 / DSM 4304 / JCM 9628 / NBRC 100126 / VC-16).